A 407-amino-acid polypeptide reads, in one-letter code: Phosphopentomutase (407 aa).

Asp10, Asp306, His311, Asp347, His348, and His359 together coordinate Mn(2+).

This sequence belongs to the phosphopentomutase family. The cofactor is Mn(2+).

It is found in the cytoplasm. It catalyses the reaction 2-deoxy-alpha-D-ribose 1-phosphate = 2-deoxy-D-ribose 5-phosphate. It carries out the reaction alpha-D-ribose 1-phosphate = D-ribose 5-phosphate. It functions in the pathway carbohydrate degradation; 2-deoxy-D-ribose 1-phosphate degradation; D-glyceraldehyde 3-phosphate and acetaldehyde from 2-deoxy-alpha-D-ribose 1-phosphate: step 1/2. Its function is as follows. Isomerase that catalyzes the conversion of deoxy-ribose 1-phosphate (dRib-1-P) and ribose 1-phosphate (Rib-1-P) to deoxy-ribose 5-phosphate (dRib-5-P) and ribose 5-phosphate (Rib-5-P), respectively. The chain is Phosphopentomutase from Enterobacter sp. (strain 638).